Consider the following 222-residue polypeptide: N-acetyltransferase 8F1 (222 aa).

The chain crosses the membrane as a helical span at residues L53–L73. The N-acetyltransferase domain maps to F69–P220.

The protein belongs to the camello family.

It localises to the membrane. May play a role in regulation of gastrulation. This Mus musculus (Mouse) protein is N-acetyltransferase 8F1.